Reading from the N-terminus, the 467-residue chain is Probable glutamate decarboxylase gamma (467 aa).

Lysine 278 carries the post-translational modification N6-(pyridoxal phosphate)lysine.

It belongs to the group II decarboxylase family. The cofactor is pyridoxal 5'-phosphate.

It carries out the reaction L-glutamate + H(+) = 4-aminobutanoate + CO2. The chain is Probable glutamate decarboxylase gamma from Listeria monocytogenes serovar 1/2a (strain ATCC BAA-679 / EGD-e).